The primary structure comprises 688 residues: PHD finger protein 21A (688 aa).

A Glycyl lysine isopeptide (Lys-Gly) (interchain with G-Cter in SUMO2) cross-link involves residue lysine 65. 2 disordered regions span residues 78–127 (SQSE…LTAS) and 327–373 (PQTV…ENPQ). Low complexity predominate over residues 85–127 (QTAQQQPLQPLQQQQPQQPQQQQQQQQQHAQQSAAAPPSLTAS). Residues 336 to 354 (SLEKQTVKSHPEAEEKQAE) show a composition bias toward basic and acidic residues. The a.T hook DNA-binding region spans 434-446 (TRKRGRPPKYNAV). The disordered stretch occupies residues 449-471 (FGALTPTSPPSSHPDSPENEKTE). A Phosphothreonine modification is found at threonine 453. Serine 456 carries the phosphoserine modification. The segment at 497-544 (EDFCSVCRKSGQLLMCDTCSRVYHLDCLEPPLKTIPKGMWICPRCQDQ) adopts a PHD-type zinc-finger fold. Residues 571–609 (KEEEKQKLLKWSSDLKQEREQLEQKVKELSSSISKCMEM) are a coiled coil. Residues 650-688 (GALSNGPDCTPPANAASTPAPSPSSQSCTANCNQGEETK) form a disordered region. Over residues 660 to 679 (PPANAASTPAPSPSSQSCTA) the composition is skewed to low complexity.

As to quaternary structure, component of a BHC histone deacetylase complex that contains HDAC1, HDAC2, HMG20B/BRAF35, KDM1A, RCOR1/CoREST and PHF21A/BHC80. The BHC complex may also contain ZMYM2, ZNF217, ZMYM3, GSE1 and GTF2I. In the complex, it interacts directly with HDAC1, HDAC2, HMG20B/BRAF35, KDM1A and RCOR1/CoREST. Expressed in the brain and testis. Weakly or not expressed in other tissues tested. Localized throughout the central nervous system (CNS) in brain, including the cerebellum, hippocampus, and cortex. Notably present in neuronal cells of granular cell layer and dentate gyrus in cerebellum and hippocampus, respectively. In the seminiferous tubules, the signals it is present strongly in spermatocytes, and weakly in spermatogonia and round spermatids. In some cases, it is also observed solely in spermatocytes (at protein level).

It is found in the nucleus. Its function is as follows. Component of the BHC complex, a corepressor complex that represses transcription of neuron-specific genes in non-neuronal cells. The BHC complex is recruited at RE1/NRSE sites by REST and acts by deacetylating and demethylating specific sites on histones, thereby acting as a chromatin modifier. In the BHC complex, it may act as a scaffold. Inhibits KDM1A-mediated demethylation of 'Lys-4' of histone H3 in vitro, suggesting a role in demethylation regulation. The protein is PHD finger protein 21A of Mus musculus (Mouse).